Here is a 691-residue protein sequence, read N- to C-terminus: Glycine--tRNA ligase beta subunit (691 aa).

Belongs to the class-II aminoacyl-tRNA synthetase family. As to quaternary structure, tetramer of two alpha and two beta subunits.

It localises to the cytoplasm. It catalyses the reaction tRNA(Gly) + glycine + ATP = glycyl-tRNA(Gly) + AMP + diphosphate. This chain is Glycine--tRNA ligase beta subunit, found in Levilactobacillus brevis (strain ATCC 367 / BCRC 12310 / CIP 105137 / JCM 1170 / LMG 11437 / NCIMB 947 / NCTC 947) (Lactobacillus brevis).